Consider the following 428-residue polypeptide: Glutamyl-tRNA reductase (428 aa).

Substrate contacts are provided by residues 50-53 (TCNR), Ser110, 115-117 (ETQ), and Gln121. The active-site Nucleophile is Cys51. 190–195 (GAGEMG) is a binding site for NADP(+).

The protein belongs to the glutamyl-tRNA reductase family. Homodimer.

It catalyses the reaction (S)-4-amino-5-oxopentanoate + tRNA(Glu) + NADP(+) = L-glutamyl-tRNA(Glu) + NADPH + H(+). The protein operates within porphyrin-containing compound metabolism; protoporphyrin-IX biosynthesis; 5-aminolevulinate from L-glutamyl-tRNA(Glu): step 1/2. In terms of biological role, catalyzes the NADPH-dependent reduction of glutamyl-tRNA(Glu) to glutamate 1-semialdehyde (GSA). This Campylobacter curvus (strain 525.92) protein is Glutamyl-tRNA reductase.